The chain runs to 397 residues: Argininosuccinate synthase (397 aa).

9–17 (AYSGGLDTS) is a binding site for ATP. Y86 contributes to the L-citrulline binding site. G116 lines the ATP pocket. Residues T118, N122, and D123 each contribute to the L-aspartate site. An L-citrulline-binding site is contributed by N122. L-citrulline-binding residues include R126, S174, E259, and Y271.

Belongs to the argininosuccinate synthase family. Type 1 subfamily. As to quaternary structure, homotetramer.

The protein localises to the cytoplasm. It catalyses the reaction L-citrulline + L-aspartate + ATP = 2-(N(omega)-L-arginino)succinate + AMP + diphosphate + H(+). Its pathway is amino-acid biosynthesis; L-arginine biosynthesis; L-arginine from L-ornithine and carbamoyl phosphate: step 2/3. This Lactococcus lactis subsp. cremoris (strain MG1363) protein is Argininosuccinate synthase.